We begin with the raw amino-acid sequence, 907 residues long: Epidermal growth factor receptor substrate 15-like 1 (907 aa).

Ala2 bears the N-acetylalanine mark. Residues 15–104 form the EH 1 domain; sequence GNPLYESYYK…SLTMPPPKFH (90 aa). The interaction with DAB2 stretch occupies residues 15-368; the sequence is GNPLYESYYK…PSERGTPIPD (354 aa). In terms of domain architecture, EF-hand 1 spans 48 to 83; it reads LSDIILGKIWDLADPEGKGFLDKQGFYVALRLVACA. Tyr74 carries the phosphotyrosine modification. Ser107 and Ser108 each carry phosphoserine. The EH 2 domain maps to 127–215; sequence EKAKFDGIFE…PPLIPPSKRK (89 aa). In terms of domain architecture, EF-hand 2 spans 159-194; sequence LPLDVLGRVWDLSDIDKDGHLDRDEFAVAMHLVYRA. Ca(2+) is bound by residues Asp172, Asp174, Asp176, His178, and Glu183. Ser229, Ser244, Ser253, Ser255, and Ser259 each carry phosphoserine. Residues 229 to 260 are disordered; that stretch reads SPPPKDSLRSTPSHGSVSSLNSTGSLSPKHSV. Low complexity predominate over residues 241 to 255; that stretch reads SHGSVSSLNSTGSLS. EF-hand domains lie at 272 to 307 and 308 to 341; these read ADKMRFDEIFLKTDLDLDGYVSGQEVKEIFMHSGLT and QNLLAHIWALADTRQTGKLSKEQFALAMYFIQQK. Positions 273–363 constitute an EH 3 domain; that stretch reads DKMRFDEIFL…PDMVPPSERG (91 aa). Ser360 carries the phosphoserine modification. Thr364 is modified (phosphothreonine). Ser369 and Ser375 each carry phosphoserine. A coiled-coil region spans residues 384–551; that stretch reads LDDISQEIAQ…RSKLSQLQES (168 aa). Ser558 carries the phosphoserine modification. Tyr562 is modified (phosphotyrosine). Position 610 is a phosphoserine (Ser610). Residues 611-860 form a disordered region; that stretch reads QELHPDPFQA…SSSGFADFTS (250 aa). Residues 622–636 show a composition bias toward basic and acidic residues; sequence DPFKSDPFKGADPFK. Residues 643-652 show a composition bias toward polar residues; it reads DPFSEQQTAA. A phosphoserine mark is found at Ser664, Ser670, Ser695, Ser715, and Ser732. A compositionally biased stretch (polar residues) spans 682–696; that stretch reads NDPFTSDPFTKNPSL. Residues 703–743 are compositionally biased toward low complexity; it reads FESSDPFSSSSISSKGSDPFGTLDPFGSSSFSSAEGFADFS. Pro residues predominate over residues 776-790; the sequence is ALPPKKPAPPRPKPP. Residue Ser791 is modified to Phosphoserine. Positions 791-802 are enriched in polar residues; that stretch reads SGQSTPVSQLGS. A Phosphothreonine modification is found at Thr795. The span at 840–853 shows a compositional bias: low complexity; it reads APSSSAKPPKTSSS. UIM domains are found at residues 863–882 and 889–907; these read NEEQQLAWAKRESEKAEQER and QEQEDLELAIALSKADMPA.

In terms of assembly, interacts with EPS15, AGFG1/HRB and AGFG2/HRBL. Associates with the clathrin-associated adapter protein complex 2 (AP-2). Interacts with FCHO1. Interacts with FCHO2. Interacts (via EH domains) with DAB2. Interacts with UBQLN1 (via ubiquitin-like domain). Interacts with CAVIN3 (via leucine-zipper domain). Interacts with REPS2. In terms of processing, phosphorylated on tyrosine residues by EGFR.

The protein localises to the cell membrane. It localises to the nucleus. Its subcellular location is the membrane. The protein resides in the coated pit. Seems to be a constitutive component of clathrin-coated pits that is required for receptor-mediated endocytosis. Involved in endocytosis of integrin beta-1 (ITGB1) and transferrin receptor (TFR); internalization of ITGB1 as DAB2-dependent cargo but not TFR seems to require association with DAB2. This Mus musculus (Mouse) protein is Epidermal growth factor receptor substrate 15-like 1 (Eps15l1).